The chain runs to 318 residues: Taste receptor type 2 member 60 (318 aa).

The Extracellular portion of the chain corresponds to 1–7; the sequence is MNGDHMV. Residues 8 to 28 traverse the membrane as a helical segment; sequence LGSSVTDKKAIILVTILLLLR. Over 29–40 the chain is Cytoplasmic; it reads LVAIAGNGFITA. The helical transmembrane segment at 41-61 threads the bilayer; sequence ALGVEWVLRRMLLPCDKLLVS. Over 62–88 the chain is Extracellular; that stretch reads LGASHFCLQSVVMGKTIYVFLYPMAFP. A helical membrane pass occupies residues 89–109; sequence YNPVLQFLAFQWDFLNAATLW. At 110–128 the chain is on the cytoplasmic side; it reads FSTWLSVFYCVKIATFTHP. The helical transmembrane segment at 129 to 149 threads the bilayer; that stretch reads VFFWLKHKLSGWLPWMVFSYV. The Extracellular segment spans residues 150–183; sequence GLSSFTTILFFIGNHRMYQNYLKNHLQPWNVTGN. N179 carries N-linked (GlcNAc...) asparagine glycosylation. The helical transmembrane segment at 184-204 threads the bilayer; that stretch reads SIRSYCEKFYLFPLKMITWTM. The Cytoplasmic segment spans residues 205–234; that stretch reads PTAVFFICMILLITSLGRHMKKALLTTSGF. Residues 235–255 form a helical membrane-spanning segment; that stretch reads REPSVQAHIKALLALLSFAML. At 256–264 the chain is on the extracellular side; the sequence is FISYFLSLV. Residues 265–285 traverse the membrane as a helical segment; the sequence is FSAAGIFPPLDFKFWVWESVI. Residues 286 to 318 lie on the Cytoplasmic side of the membrane; the sequence is YLCAAVHPIILLFSNCRLRAVLKSRRSSRCGTP.

Belongs to the G-protein coupled receptor T2R family.

The protein resides in the membrane. Receptor that may play a role in the perception of bitterness and is gustducin-linked. May play a role in sensing the chemical composition of the gastrointestinal content. The activity of this receptor may stimulate alpha gustducin, mediate PLC-beta-2 activation and lead to the gating of TRPM5. The sequence is that of Taste receptor type 2 member 60 (TAS2R60) from Pan troglodytes (Chimpanzee).